We begin with the raw amino-acid sequence, 219 residues long: Germin-like protein subfamily 2 member 2 (219 aa).

Positions 1-22 (MMNSRISIIIALSCIMITSIRA) are cleaved as a signal peptide. A disulfide bond links Cys32 and Cys47. Asn52 and Asn70 each carry an N-linked (GlcNAc...) asparagine glycan. The Cupin type-1 domain occupies 59 to 209 (FFAGISKPAV…TFQVGSKMVD (151 aa)). Residues His109, His111, Glu116, and His155 each contribute to the Mn(2+) site.

This sequence belongs to the germin family. Oligomer (believed to be a pentamer but probably hexamer).

It is found in the secreted. The protein resides in the extracellular space. Its subcellular location is the apoplast. Functionally, may play a role in plant defense. Probably has no oxalate oxidase activity even if the active site is conserved. The protein is Germin-like protein subfamily 2 member 2 of Arabidopsis thaliana (Mouse-ear cress).